Consider the following 375-residue polypeptide: Anhydro-N-acetylmuramic acid kinase (375 aa).

12–19 (GTSLDGVD) is an ATP binding site.

This sequence belongs to the anhydro-N-acetylmuramic acid kinase family.

It carries out the reaction 1,6-anhydro-N-acetyl-beta-muramate + ATP + H2O = N-acetyl-D-muramate 6-phosphate + ADP + H(+). It functions in the pathway amino-sugar metabolism; 1,6-anhydro-N-acetylmuramate degradation. The protein operates within cell wall biogenesis; peptidoglycan recycling. Catalyzes the specific phosphorylation of 1,6-anhydro-N-acetylmuramic acid (anhMurNAc) with the simultaneous cleavage of the 1,6-anhydro ring, generating MurNAc-6-P. Is required for the utilization of anhMurNAc either imported from the medium or derived from its own cell wall murein, and thus plays a role in cell wall recycling. The sequence is that of Anhydro-N-acetylmuramic acid kinase from Mannheimia succiniciproducens (strain KCTC 0769BP / MBEL55E).